The sequence spans 230 residues: MIRVILTDIEGTTSSISFVHDVLFPYASEHLPEFIRANHHTLPAVAEQLVRVAEISGTDRKDIDGLINVLQEWIAEDRKEGALKALQGMVWEQGYHSGELKGHIYPDAADYLKRWHDRGLRLFVYSSGSVKAQKLIFGHSNEGDFTVFFSGYFDTAVGGKKESQSYRNILAELGVDAGTVLFLSDVEEELRAAEEAGLKTAWLVREGELPDTARVVARDFSEVDALLRKR.

It belongs to the HAD-like hydrolase superfamily. MasA/MtnC family. In terms of assembly, monomer. Mg(2+) is required as a cofactor.

The enzyme catalyses 5-methylsulfanyl-2,3-dioxopentyl phosphate + H2O = 1,2-dihydroxy-5-(methylsulfanyl)pent-1-en-3-one + phosphate. It participates in amino-acid biosynthesis; L-methionine biosynthesis via salvage pathway; L-methionine from S-methyl-5-thio-alpha-D-ribose 1-phosphate: step 3/6. It functions in the pathway amino-acid biosynthesis; L-methionine biosynthesis via salvage pathway; L-methionine from S-methyl-5-thio-alpha-D-ribose 1-phosphate: step 4/6. In terms of biological role, bifunctional enzyme that catalyzes the enolization of 2,3-diketo-5-methylthiopentyl-1-phosphate (DK-MTP-1-P) into the intermediate 2-hydroxy-3-keto-5-methylthiopentenyl-1-phosphate (HK-MTPenyl-1-P), which is then dephosphorylated to form the acireductone 1,2-dihydroxy-3-keto-5-methylthiopentene (DHK-MTPene). This is Enolase-phosphatase E1 from Marinobacter nauticus (strain ATCC 700491 / DSM 11845 / VT8) (Marinobacter aquaeolei).